A 371-amino-acid chain; its full sequence is Transaldolase (371 aa).

Catalysis depends on Lys-140, which acts as the Schiff-base intermediate with substrate.

The protein belongs to the transaldolase family. Type 2 subfamily.

Its subcellular location is the cytoplasm. It carries out the reaction D-sedoheptulose 7-phosphate + D-glyceraldehyde 3-phosphate = D-erythrose 4-phosphate + beta-D-fructose 6-phosphate. It functions in the pathway carbohydrate degradation; pentose phosphate pathway; D-glyceraldehyde 3-phosphate and beta-D-fructose 6-phosphate from D-ribose 5-phosphate and D-xylulose 5-phosphate (non-oxidative stage): step 2/3. Its function is as follows. Transaldolase is important for the balance of metabolites in the pentose-phosphate pathway. In Frankia alni (strain DSM 45986 / CECT 9034 / ACN14a), this protein is Transaldolase.